The primary structure comprises 424 residues: Hemagglutinin-esterase (424 aa).

The first 16 residues, 1–16 (MFLLPRFILVSCIIGS), serve as a signal peptide directing secretion. The interval 7-127 (FILVSCIIGS…SNDIWMQNKG (121 aa)) is esterase domain 1. The Virion surface portion of the chain corresponds to 17–392 (LGFYNPPTNV…PICVYDPLPV (376 aa)). S40 (nucleophile) is an active-site residue. A disulfide bridge connects residues C44 and C65. 6 N-linked (GlcNAc...) asparagine; by host glycosylation sites follow: N54, N89, N114, N153, N236, and N301. Cystine bridges form between C113/C162, C197/C276, and C205/C249. The interval 128-266 (LFYTQVYKNM…GNYLAISNEL (139 aa)) is receptor binding. Positions 267 to 379 (LLTVPTKAIC…RCPTAADINN (113 aa)) are esterase domain 2. Residues C307 and C312 are joined by a disulfide bond. Residue N316 is glycosylated (N-linked (GlcNAc...) asparagine; by host). Residues D326 and H329 each act as charge relay system in the active site. Cysteines 347 and 371 form a disulfide. N358 is a glycosylation site (N-linked (GlcNAc...) asparagine; by host). A helical transmembrane segment spans residues 393 to 413 (ILLGILLGVAVIIIVVLLLYF). The Intravirion segment spans residues 414–424 (MVDNGTRLHDA). N417 carries an N-linked (GlcNAc...) asparagine; by host glycan.

The protein belongs to the influenza type C/coronaviruses hemagglutinin-esterase family. In terms of assembly, homodimer; disulfide-linked. Forms a complex with the M protein in the pre-Golgi. Associates then with S-M complex to form a ternary complex S-M-HE. N-glycosylated in the host RER.

The protein localises to the virion membrane. Its subcellular location is the host cell membrane. It catalyses the reaction N-acetyl-9-O-acetylneuraminate + H2O = N-acetylneuraminate + acetate + H(+). The catalysed reaction is N-acetyl-4-O-acetylneuraminate + H2O = N-acetylneuraminate + acetate + H(+). In terms of biological role, structural protein that makes short spikes at the surface of the virus. Contains receptor binding and receptor-destroying activities. Mediates de-O-acetylation of N-acetyl-4-O-acetylneuraminic acid, which is probably the receptor determinant recognized by the virus on the surface of erythrocytes and susceptible cells. This receptor-destroying activity is important for virus release as it probably helps preventing self-aggregation and ensures the efficient spread of the progeny virus from cell to cell. May serve as a secondary viral attachment protein for initiating infection, the spike protein being the major one. May become a target for both the humoral and the cellular branches of the immune system. This Homo sapiens (Human) protein is Hemagglutinin-esterase.